Here is a 299-residue protein sequence, read N- to C-terminus: Fluorinase (299 aa).

S-adenosyl-L-methionine is bound by residues D15, 20–22 (DDS), Y76, S157, D210, N215, 269–270 (SR), and 277–279 (RNA).

The protein belongs to the SAM hydrolase / SAM-dependent halogenase family.

The enzyme catalyses fluoride + S-adenosyl-L-methionine = 5'-deoxy-5'-fluoroadenosine + L-methionine. Its activity is regulated as follows. Activity is not severely affected by most metal ions (Mg(2+), Mn(2+), Co(2+) and Fe(2+)), but both Cu(2+) and Zn(2+) are strong inhibitors. In terms of biological role, catalyzes the formation of a C-F bond by combining S-adenosyl-L-methionine (SAM) and fluoride to generate 5'-fluoro-5'-deoxyadenosine (5'-FDA) and L-methionine. The protein is Fluorinase of Actinopolyspora mzabensis.